The chain runs to 474 residues: Coiled-coil domain-containing protein 174 (474 aa).

2 disordered regions span residues 39–86 and 129–170; these read GVFG…REKL and GATR…PSEE. Basic and acidic residues-rich tracts occupy residues 64–86 and 129–142; these read RAEK…REKL and GATR…ERDA. A coiled-coil region spans residues 64-98; sequence RAEKDAEQKLEEQKTLDKSREKLEEKAKLYEKMTK. Over residues 148–157 the composition is skewed to acidic residues; the sequence is NDDDDEEEFS. At Ser-206 the chain carries Phosphoserine. Residues 276 to 317 adopt a coiled-coil conformation; that stretch reads LEMLREQTTDQRIKRENIKEKRKAILEARLAKLRQKKMKKSK. Disordered stretches follow at residues 309–372 and 389–461; these read RQKK…IREW and ELRA…VTFQ. Basic and acidic residues-rich tracts occupy residues 316–327 and 356–372; these read SKVDGTEEESRA and IQER…IREW. The segment covering 410–419 has biased composition (polar residues); it reads RTGSLSSQPW. Positions 430–453 are enriched in low complexity; sequence GHSSGQSQEPSSSHTSTPASESSP.

The protein resides in the nucleus. In terms of biological role, probably involved in neuronal development. This Rattus norvegicus (Rat) protein is Coiled-coil domain-containing protein 174 (Ccdc174).